A 684-amino-acid chain; its full sequence is MIQLYGLRKDYRVGDHDLPVLKGITLNIEAGEYVALMGSSGSGKTTLMNLLGSLDHPTDGDYHLAGIDVSSLTPLELAAFRSQHIGFVFQNFNLLPRATALDNVMLPTIYASDGRSRRECIEDATKLLESVGLGGRLDHMPNQLSGGERQRIAIARALMNRPKLLLADEPTGNLDTVTEQEILALFRQLNQEHGITLVVVTHDAEVAHEADRVVRMKDGLVAEDVRQRASTVDRSRLANSRAEPLREPASAWSLPATWNAIVVAVLALRRNALRTVLTMLGVIIGVASVISTMELSAGASTAIEETVASMGASMLTISPGKASSTSGRQRPIQIIPDDVVAVAEQCSAVKVAAPLVYSQVQLVRQNRRWSPNLALGTTSQYLAARNWDQLELGTPFTQEQVLDAAKVCILGKTVAHELFDSEYPIGEEIRVNGVPLRVVGVLTEKGGDVIGNDQDDIIIGPWTTFKLRVNSSTGATAQFSTFADQMPPMQLASTRRSTQREEIHQIYVEAESPDHVELARQQITQVLSRRHNVEPAGAYRINDITEVSKVVGQVVGGVSALGLVIAGVSLMVGGVGIMNIMLVSVTERTREIGLRMAVGANRSAILRQFLIEATVLCVVGGFIGIFAGHMWSVLVGRVIGWPTAMSIWAPIVAVTVAATVGIVFGYYPARTASRLNPIDALRYE.

Residues isoleucine 2–glutamate 243 enclose the ABC transporter domain. Residue glycine 38–threonine 45 participates in ATP binding. The next 5 helical transmembrane spans lie at proline 248–leucine 268, threonine 275–leucine 295, leucine 563–valine 583, valine 615–valine 635, and alanine 644–phenylalanine 664.

Belongs to the ABC transporter superfamily. Macrolide exporter (TC 3.A.1.122) family. As to quaternary structure, homodimer.

The protein localises to the cell inner membrane. Non-canonical ABC transporter that contains transmembrane domains (TMD), which form a pore in the inner membrane, and an ATP-binding domain (NBD), which is responsible for energy generation. Confers resistance against macrolides. This chain is Macrolide export ATP-binding/permease protein MacB, found in Rhodopirellula baltica (strain DSM 10527 / NCIMB 13988 / SH1).